Here is a 507-residue protein sequence, read N- to C-terminus: ATP synthase subunit alpha, chloroplastic (507 aa).

170–177 provides a ligand contact to ATP; sequence GDRQTGKT.

It belongs to the ATPase alpha/beta chains family. In terms of assembly, F-type ATPases have 2 components, CF(1) - the catalytic core - and CF(0) - the membrane proton channel. CF(1) has five subunits: alpha(3), beta(3), gamma(1), delta(1), epsilon(1). CF(0) has four main subunits: a, b, b' and c.

The protein resides in the plastid. The protein localises to the chloroplast thylakoid membrane. It carries out the reaction ATP + H2O + 4 H(+)(in) = ADP + phosphate + 5 H(+)(out). Produces ATP from ADP in the presence of a proton gradient across the membrane. The alpha chain is a regulatory subunit. This is ATP synthase subunit alpha, chloroplastic from Anthoceros angustus (Hornwort).